The chain runs to 199 residues: ATP-dependent Clp protease proteolytic subunit (199 aa).

The active-site Nucleophile is the serine 97. Residue histidine 122 is part of the active site.

It belongs to the peptidase S14 family. Fourteen ClpP subunits assemble into 2 heptameric rings which stack back to back to give a disk-like structure with a central cavity, resembling the structure of eukaryotic proteasomes.

The protein localises to the cytoplasm. The enzyme catalyses Hydrolysis of proteins to small peptides in the presence of ATP and magnesium. alpha-casein is the usual test substrate. In the absence of ATP, only oligopeptides shorter than five residues are hydrolyzed (such as succinyl-Leu-Tyr-|-NHMec, and Leu-Tyr-Leu-|-Tyr-Trp, in which cleavage of the -Tyr-|-Leu- and -Tyr-|-Trp bonds also occurs).. Cleaves peptides in various proteins in a process that requires ATP hydrolysis. Has a chymotrypsin-like activity. Plays a major role in the degradation of misfolded proteins. The sequence is that of ATP-dependent Clp protease proteolytic subunit from Pelobacter propionicus (strain DSM 2379 / NBRC 103807 / OttBd1).